A 168-amino-acid polypeptide reads, in one-letter code: Cell division inhibitor SulA (168 aa).

Positions 105–111 are ftsZ binding; sequence ALETGNY. Positions 161–168 are lon protease binding; the sequence is RIHSRMVH.

This sequence belongs to the SulA family. As to quaternary structure, interacts with FtsZ. In terms of processing, is rapidly cleaved and degraded by the Lon protease once DNA damage is repaired.

In terms of biological role, component of the SOS system and an inhibitor of cell division. Accumulation of SulA causes rapid cessation of cell division and the appearance of long, non-septate filaments. In the presence of GTP, binds a polymerization-competent form of FtsZ in a 1:1 ratio, thus inhibiting FtsZ polymerization and therefore preventing it from participating in the assembly of the Z ring. This mechanism prevents the premature segregation of damaged DNA to daughter cells during cell division. The chain is Cell division inhibitor SulA from Cronobacter turicensis (strain DSM 18703 / CCUG 55852 / LMG 23827 / z3032).